The primary structure comprises 346 residues: MMVHSPLATGPHPTTHLEPTMHQPHRSLLRKAFQMIPPLDGSLHKGQAGRIGIVGGSKDYTGAPFYSGYASLRLGSDLSHVICEPSASTVIKTYSPDLMVHSYLSSPKEPEAYASHQNQFEQLLDRLHVLVVGPGLGRDTEMQDWAEWTLKTAIQKKLHLVLDADALWLLVKKPDLLRGYPNAILTPNHVEFQRLLKACSIEPREHDDDGLLAMELSKALGGCSILQKGSIDLVAREGSEVAKVSCEGSPKRCGGQGDILSGLVGTWCAWTKLYFERQSQDEKPKSHELPISPEEAWIIAAVLGSEITRTCSRLAYHKFGRSMQSSDMLGYIGEAFEQVMHGHTKD.

The segment at 1 to 20 is disordered; sequence MMVHSPLATGPHPTTHLEPT. Positions 28 to 339 constitute a YjeF C-terminal domain; that stretch reads LLRKAFQMIP…GYIGEAFEQV (312 aa). (6S)-NADPHX contacts are provided by residues Gly135 and 188–194; that span reads NHVEFQR. ATP-binding positions include 228–232 and 248–257; these read KGSID and GSPKRCGGQG. Asp258 serves as a coordination point for (6S)-NADPHX.

It belongs to the NnrD/CARKD family. It depends on Mg(2+) as a cofactor.

It localises to the cytoplasm. The catalysed reaction is (6S)-NADHX + ATP = ADP + phosphate + NADH + H(+). The enzyme catalyses (6S)-NADPHX + ATP = ADP + phosphate + NADPH + H(+). Its function is as follows. Catalyzes the dehydration of the S-form of NAD(P)HX at the expense of ATP, which is converted to ADP. Together with NAD(P)HX epimerase, which catalyzes the epimerization of the S- and R-forms, the enzyme allows the repair of both epimers of NAD(P)HX, a damaged form of NAD(P)H that is a result of enzymatic or heat-dependent hydration. The chain is ATP-dependent (S)-NAD(P)H-hydrate dehydratase 2 from Puccinia graminis f. sp. tritici (strain CRL 75-36-700-3 / race SCCL) (Black stem rust fungus).